The primary structure comprises 163 residues: Endoribonuclease YbeY (163 aa).

Positions 119, 123, and 129 each coordinate Zn(2+).

The protein belongs to the endoribonuclease YbeY family. Requires Zn(2+) as cofactor.

It is found in the cytoplasm. In terms of biological role, single strand-specific metallo-endoribonuclease involved in late-stage 70S ribosome quality control and in maturation of the 3' terminus of the 16S rRNA. The polypeptide is Endoribonuclease YbeY (Actinobacillus pleuropneumoniae serotype 5b (strain L20)).